Reading from the N-terminus, the 372-residue chain is Glutamate 5-kinase (372 aa).

Lysine 14 serves as a coordination point for ATP. Substrate contacts are provided by serine 54, aspartate 141, and asparagine 153. 173–174 (TD) is an ATP binding site. The 79-residue stretch at 280–358 (RGRVVIDAGA…SEIESVLGHL (79 aa)) folds into the PUA domain.

Belongs to the glutamate 5-kinase family.

It is found in the cytoplasm. It carries out the reaction L-glutamate + ATP = L-glutamyl 5-phosphate + ADP. Its pathway is amino-acid biosynthesis; L-proline biosynthesis; L-glutamate 5-semialdehyde from L-glutamate: step 1/2. Functionally, catalyzes the transfer of a phosphate group to glutamate to form L-glutamate 5-phosphate. The sequence is that of Glutamate 5-kinase from Cupriavidus pinatubonensis (strain JMP 134 / LMG 1197) (Cupriavidus necator (strain JMP 134)).